The chain runs to 85 residues: Beta-defensin 18 (85 aa).

The signal sequence occupies residues 1–23 (MQSTMKMFGIILMVIFSVSCGPS). Cystine bridges form between Cys-39/Cys-65, Cys-46/Cys-60, and Cys-50/Cys-66.

The protein belongs to the beta-defensin family.

It localises to the secreted. Has antibacterial activity. This chain is Beta-defensin 18 (Defb18), found in Mus musculus (Mouse).